Consider the following 412-residue polypeptide: Class E basic helix-loop-helix protein 40 (412 aa).

Positions 1 to 21 are disordered; sequence MERIPSAQPPPTCLPKAPGLE. The interval 1–139 is essential for interaction with BMAL1, E-box binding and repressor activity against the CLOCK-BMAL1 heterodimer; it reads MERIPSAQPP…LSGRNVEAGQ (139 aa). One can recognise a bHLH domain in the interval 52–107; sequence TYKLPHRLIEKKRRDRINECIAQLKDLLPEHLKLTTLGHLEKAVVLELTLKHVKAL. The tract at residues 75-79 is necessary for interaction with RXRA and repressor activity against RXRA; it reads LKDLL. Residues 142-175 enclose the Orange domain; that stretch reads FCSGFQTCAREVLQYLAKHENTRDLKSSQLVTHL. Lysine 159 is covalently cross-linked (Glycyl lysine isopeptide (Lys-Gly) (interchain with G-Cter in SUMO1, SUMO2 and SUMO3)). A Glycyl lysine isopeptide (Lys-Gly) (interchain with G-Cter in SUMO2) cross-link involves residue lysine 167. Disordered regions lie at residues 182–256 and 279–298; these read LLQG…ELRV and KQES…SDDE. Serine 235 is subject to Phosphoserine. Lysine 279 is covalently cross-linked (Glycyl lysine isopeptide (Lys-Gly) (interchain with G-Cter in SUMO1); alternate). A Glycyl lysine isopeptide (Lys-Gly) (interchain with G-Cter in SUMO1, SUMO2 and SUMO3); alternate cross-link involves residue lysine 279. A Glycyl lysine isopeptide (Lys-Gly) (interchain with G-Cter in SUMO2); alternate cross-link involves residue lysine 279. A Glycyl lysine isopeptide (Lys-Gly) (interchain with G-Cter in SUMO2) cross-link involves residue lysine 288. Phosphoserine is present on serine 383.

Homodimer. Heterodimer with BHLHE41/DEC2. Interacts with TCF3/E47. Interacts with ubiquitin-conjugating enzyme UBE2I/UBC9. Interacts with HDAC1, SUMO1, RXRA and BMAL1. In terms of processing, ubiquitinated; which may lead to proteasomal degradation. Post-translationally, sumoylation inhibits its ubiquitination and promotes its negative regulation of the CLOCK-BMAL1 heterodimer transcriptional activator activity.

It localises to the cytoplasm. Its subcellular location is the nucleus. In terms of biological role, transcriptional repressor involved in the regulation of the circadian rhythm by negatively regulating the activity of the clock genes and clock-controlled genes. Acts as the negative limb of a novel autoregulatory feedback loop (DEC loop) which differs from the one formed by the PER and CRY transcriptional repressors (PER/CRY loop). Both these loops are interlocked as it represses the expression of PER1/2 and in turn is repressed by PER1/2 and CRY1/2. Represses the activity of the circadian transcriptional activator: CLOCK-BMAL1|BMAL2 heterodimer by competing for the binding to E-box elements (5'-CACGTG-3') found within the promoters of its target genes. Negatively regulates its own expression and the expression of DBP and BHLHE41/DEC2. Acts as a corepressor of RXR and the RXR-LXR heterodimers and represses the ligand-induced RXRA and NR1H3/LXRA transactivation activity. May be involved in the regulation of chondrocyte differentiation via the cAMP pathway. Represses the transcription of NR0B2 and attentuates the transactivation of NR0B2 by the CLOCK-BMAL1 complex. Drives the circadian rhythm of blood pressure through transcriptional repression of ATP1B1 in the cardiovascular system. The chain is Class E basic helix-loop-helix protein 40 (BHLHE40) from Bos taurus (Bovine).